A 278-amino-acid chain; its full sequence is uncharacterized protein (278 aa).

Residues 1-55 form the Response regulatory domain; it reads MKIRERFSMVDLPVLIITAAIIGHDKYKAFHAGANDILQKPYHYSEFMARIQNLI.

This is an uncharacterized protein from Bacillus subtilis (strain 168).